The primary structure comprises 368 residues: UDP-N-acetylglucosamine--N-acetylmuramyl-(pentapeptide) pyrophosphoryl-undecaprenol N-acetylglucosamine transferase (368 aa).

Residues 13–15, asparagine 127, arginine 168, serine 200, isoleucine 254, and glutamine 299 each bind UDP-N-acetyl-alpha-D-glucosamine; that span reads TGG.

This sequence belongs to the glycosyltransferase 28 family. MurG subfamily.

The protein localises to the cell inner membrane. The catalysed reaction is di-trans,octa-cis-undecaprenyl diphospho-N-acetyl-alpha-D-muramoyl-L-alanyl-D-glutamyl-meso-2,6-diaminopimeloyl-D-alanyl-D-alanine + UDP-N-acetyl-alpha-D-glucosamine = di-trans,octa-cis-undecaprenyl diphospho-[N-acetyl-alpha-D-glucosaminyl-(1-&gt;4)]-N-acetyl-alpha-D-muramoyl-L-alanyl-D-glutamyl-meso-2,6-diaminopimeloyl-D-alanyl-D-alanine + UDP + H(+). It functions in the pathway cell wall biogenesis; peptidoglycan biosynthesis. Its function is as follows. Cell wall formation. Catalyzes the transfer of a GlcNAc subunit on undecaprenyl-pyrophosphoryl-MurNAc-pentapeptide (lipid intermediate I) to form undecaprenyl-pyrophosphoryl-MurNAc-(pentapeptide)GlcNAc (lipid intermediate II). The chain is UDP-N-acetylglucosamine--N-acetylmuramyl-(pentapeptide) pyrophosphoryl-undecaprenol N-acetylglucosamine transferase from Parabacteroides distasonis (strain ATCC 8503 / DSM 20701 / CIP 104284 / JCM 5825 / NCTC 11152).